A 534-amino-acid chain; its full sequence is Glucans biosynthesis protein D (534 aa).

The tat-type signal signal peptide spans 1 to 26 (MQRRDFIRNASLALAAFGLPSLPACA).

This sequence belongs to the OpgD/OpgG family. Post-translationally, predicted to be exported by the Tat system. The position of the signal peptide cleavage has not been experimentally proven.

It localises to the periplasm. The protein operates within glycan metabolism; osmoregulated periplasmic glucan (OPG) biosynthesis. Its function is as follows. Probably involved in the control of the structural glucose backbone of osmoregulated periplasmic glucans (OPGs). In Stenotrophomonas maltophilia (strain R551-3), this protein is Glucans biosynthesis protein D.